The sequence spans 99 residues: DNA-directed RNA polymerase subunit omega (99 aa).

Residues 1–10 show a composition bias toward low complexity; sequence MSSTSAASAA. A disordered region spans residues 1 to 20; it reads MSSTSAASAAGQGALPAYDT.

The protein belongs to the RNA polymerase subunit omega family. The RNAP catalytic core consists of 2 alpha, 1 beta, 1 beta' and 1 omega subunit. When a sigma factor is associated with the core the holoenzyme is formed, which can initiate transcription.

It catalyses the reaction RNA(n) + a ribonucleoside 5'-triphosphate = RNA(n+1) + diphosphate. Promotes RNA polymerase assembly. Latches the N- and C-terminal regions of the beta' subunit thereby facilitating its interaction with the beta and alpha subunits. This Rhodococcus erythropolis (strain PR4 / NBRC 100887) protein is DNA-directed RNA polymerase subunit omega.